Reading from the N-terminus, the 143-residue chain is Large ribosomal subunit protein uL15 (143 aa).

Basic residues-rich tracts occupy residues 1 to 13 (MIRK…KMRG) and 23 to 38 (KKHR…GNAG). Positions 1 to 38 (MIRKSKKITKMRGSRTCGYGEAKKHRGAGHRGGRGNAG) are disordered.

This sequence belongs to the universal ribosomal protein uL15 family. Part of the 50S ribosomal subunit.

In terms of biological role, binds to the 23S rRNA. The sequence is that of Large ribosomal subunit protein uL15 from Methanococcus maripaludis (strain C7 / ATCC BAA-1331).